Reading from the N-terminus, the 387-residue chain is UDP-N-acetylglucosamine--N-acetylmuramyl-(pentapeptide) pyrophosphoryl-undecaprenol N-acetylglucosamine transferase (387 aa).

UDP-N-acetyl-alpha-D-glucosamine contacts are provided by residues 23 to 25 (TGG), N135, R174, S203, I261, 280 to 285 (ALTVSE), and Q306.

Belongs to the glycosyltransferase 28 family. MurG subfamily.

The protein resides in the cell inner membrane. It carries out the reaction di-trans,octa-cis-undecaprenyl diphospho-N-acetyl-alpha-D-muramoyl-L-alanyl-D-glutamyl-meso-2,6-diaminopimeloyl-D-alanyl-D-alanine + UDP-N-acetyl-alpha-D-glucosamine = di-trans,octa-cis-undecaprenyl diphospho-[N-acetyl-alpha-D-glucosaminyl-(1-&gt;4)]-N-acetyl-alpha-D-muramoyl-L-alanyl-D-glutamyl-meso-2,6-diaminopimeloyl-D-alanyl-D-alanine + UDP + H(+). It functions in the pathway cell wall biogenesis; peptidoglycan biosynthesis. Cell wall formation. Catalyzes the transfer of a GlcNAc subunit on undecaprenyl-pyrophosphoryl-MurNAc-pentapeptide (lipid intermediate I) to form undecaprenyl-pyrophosphoryl-MurNAc-(pentapeptide)GlcNAc (lipid intermediate II). In Colwellia psychrerythraea (strain 34H / ATCC BAA-681) (Vibrio psychroerythus), this protein is UDP-N-acetylglucosamine--N-acetylmuramyl-(pentapeptide) pyrophosphoryl-undecaprenol N-acetylglucosamine transferase.